The following is a 260-amino-acid chain: Thiazole synthase (260 aa).

The active-site Schiff-base intermediate with DXP is Lys-96. Residues Gly-157, 184 to 185, and 206 to 207 each bind 1-deoxy-D-xylulose 5-phosphate; these read AG and NT.

It belongs to the ThiG family. In terms of assembly, homotetramer. Forms heterodimers with either ThiH or ThiS.

It is found in the cytoplasm. The enzyme catalyses [ThiS sulfur-carrier protein]-C-terminal-Gly-aminoethanethioate + 2-iminoacetate + 1-deoxy-D-xylulose 5-phosphate = [ThiS sulfur-carrier protein]-C-terminal Gly-Gly + 2-[(2R,5Z)-2-carboxy-4-methylthiazol-5(2H)-ylidene]ethyl phosphate + 2 H2O + H(+). It participates in cofactor biosynthesis; thiamine diphosphate biosynthesis. Catalyzes the rearrangement of 1-deoxy-D-xylulose 5-phosphate (DXP) to produce the thiazole phosphate moiety of thiamine. Sulfur is provided by the thiocarboxylate moiety of the carrier protein ThiS. In vitro, sulfur can be provided by H(2)S. The protein is Thiazole synthase of Nitrobacter winogradskyi (strain ATCC 25391 / DSM 10237 / CIP 104748 / NCIMB 11846 / Nb-255).